Here is a 214-residue protein sequence, read N- to C-terminus: Orotate phosphoribosyltransferase (214 aa).

Lys-26 is a binding site for 5-phospho-alpha-D-ribose 1-diphosphate. 34 to 35 (FF) contributes to the orotate binding site. 5-phospho-alpha-D-ribose 1-diphosphate is bound by residues 72-73 (YK), Arg-99, Lys-100, Lys-103, His-105, and 124-132 (DDVITAGTA). Orotate contacts are provided by Thr-128 and Arg-156.

The protein belongs to the purine/pyrimidine phosphoribosyltransferase family. PyrE subfamily. In terms of assembly, homodimer. Mg(2+) serves as cofactor.

It carries out the reaction orotidine 5'-phosphate + diphosphate = orotate + 5-phospho-alpha-D-ribose 1-diphosphate. It functions in the pathway pyrimidine metabolism; UMP biosynthesis via de novo pathway; UMP from orotate: step 1/2. In terms of biological role, catalyzes the transfer of a ribosyl phosphate group from 5-phosphoribose 1-diphosphate to orotate, leading to the formation of orotidine monophosphate (OMP). The chain is Orotate phosphoribosyltransferase from Mannheimia succiniciproducens (strain KCTC 0769BP / MBEL55E).